We begin with the raw amino-acid sequence, 434 residues long: MFS-type transporter pynF (434 aa).

The segment covering 1–13 has biased composition (basic and acidic residues); the sequence is MSHDQRSPSEEVS. The tract at residues 1–34 is disordered; it reads MSHDQRSPSEEVSRTALSKPASESTIVGDGHHPL. Transmembrane regions (helical) follow at residues 44-64, 84-104, 109-129, 138-158, 171-191, 203-223, 249-269, 280-302, 311-331, 334-354, 375-395, and 402-422; these read WLVV…LNAF, IAWI…VVGP, VGAT…LMLT, LILA…YPTI, IALG…TEII, TVRA…VLII, LLFS…FFYL, VTGA…VLTG, FNVI…LHKI, SGAI…LISL, LMMG…GALL, and WYGF…VTIL.

The protein belongs to the major facilitator superfamily. Monocarboxylate porter (TC 2.A.1.13) family.

The protein localises to the cell membrane. MFS-type transporter; part of the gene cluster that mediates the biosynthesis of pyranonigrins, a family of antioxidative compounds. May be involved in the secretion of pyranonigrins. This chain is MFS-type transporter pynF, found in Aspergillus niger (strain ATCC MYA-4892 / CBS 513.88 / FGSC A1513).